The sequence spans 310 residues: Putative methyltransferase mtx subunit H (310 aa).

It belongs to the MtrH family. In terms of assembly, may be part of a complex composed of 3 subunits; MtxA, MtxH and MtxX.

The protein is Putative methyltransferase mtx subunit H (mtxH) of Methanosarcina mazei (strain ATCC BAA-159 / DSM 3647 / Goe1 / Go1 / JCM 11833 / OCM 88) (Methanosarcina frisia).